A 318-amino-acid polypeptide reads, in one-letter code: Transcription factor MYBS3 (318 aa).

Disordered stretches follow at residues 1 to 20 (MTRRCSHCSHNGHNSRTCPN) and 50 to 98 (AAGS…PWTE). The CCHC-type zinc-finger motif lies at 3-20 (RRCSHCSHNGHNSRTCPN). Over residues 8–18 (CSHNGHNSRTC) the composition is skewed to polar residues. Residues 50–77 (AAGSTSGGASPADGPDAAPTAADGYASD) show a composition bias toward low complexity. In terms of domain architecture, HTH myb-type spans 88–144 (RDRKKGVPWTEEEHRRFLLGLQKLGKGDWRGISRNFVVSRTPTQVASHAQKYFIRQS). A DNA-binding region (H-T-H motif) is located at residues 116-140 (WRGISRNFVVSRTPTQVASHAQKYF). A disordered region spans residues 159–200 (VPDESMDLPPLPGGQEPETQVLNQPALPPPREEEEVDSMESD).

In terms of tissue distribution, expressed in all tissues, with the highest level in senescent leaves.

It localises to the nucleus. Transcription repressor that binds to 5'-TATCCA-3' elements in gene promoters. Contributes to the sugar-repressed transcription of promoters containing SRS or 5'-TATCCA-3' elements. Transcription repressor involved in a cold stress response pathway that confers cold tolerance. Suppresses the DREB1-dependent signaling pathway under prolonged cold stress. DREB1 responds quickly and transiently while MYBS3 responds slowly to cold stress. They may act sequentially and complementarily for adaptation to short- and long-term cold stress. The polypeptide is Transcription factor MYBS3 (Oryza sativa subsp. japonica (Rice)).